Here is a 91-residue protein sequence, read N- to C-terminus: Small ribosomal subunit protein bS16 (91 aa).

Belongs to the bacterial ribosomal protein bS16 family.

The protein is Small ribosomal subunit protein bS16 of Latilactobacillus sakei subsp. sakei (strain 23K) (Lactobacillus sakei subsp. sakei).